Reading from the N-terminus, the 255-residue chain is Type III pantothenate kinase (255 aa).

6-13 provides a ligand contact to ATP; it reads DIGNSNID. 107-110 serves as a coordination point for substrate; the sequence is GADL. D109 functions as the Proton acceptor in the catalytic mechanism. D129 contacts K(+). An ATP-binding site is contributed by T132. Residue T183 participates in substrate binding.

The protein belongs to the type III pantothenate kinase family. As to quaternary structure, homodimer. NH4(+) serves as cofactor. It depends on K(+) as a cofactor.

The protein resides in the cytoplasm. The catalysed reaction is (R)-pantothenate + ATP = (R)-4'-phosphopantothenate + ADP + H(+). It functions in the pathway cofactor biosynthesis; coenzyme A biosynthesis; CoA from (R)-pantothenate: step 1/5. Functionally, catalyzes the phosphorylation of pantothenate (Pan), the first step in CoA biosynthesis. The polypeptide is Type III pantothenate kinase (Dictyoglomus turgidum (strain DSM 6724 / Z-1310)).